The sequence spans 291 residues: m-AAA protease-interacting protein 1, mitochondrial (291 aa).

A mitochondrion-targeting transit peptide spans 1–96 (MALAARLLPL…SLPASPSRSY (96 aa)).

In terms of assembly, interacts with AFG3L2. Interacts with SPG7. Interacts with SMDT1/EMRE (via the N-terminal transit peptide); interaction is direct and takes place before maturation of SMDT1/EMRE.

It is found in the mitochondrion matrix. Functionally, promotes sorting of SMDT1/EMRE in mitochondria by ensuring its maturation. Interacts with the transit peptide region of SMDT1/EMRE precursor protein in the mitochondrial matrix, leading to protect it against protein degradation by YME1L1, thereby ensuring SMDT1/EMRE maturation by the mitochondrial processing peptidase (PMPCA and PMPCB). This is m-AAA protease-interacting protein 1, mitochondrial from Mus musculus (Mouse).